Reading from the N-terminus, the 363-residue chain is Protein RecA (363 aa).

66-73 is an ATP binding site; the sequence is GPESSGKT. A disordered region spans residues 327–363; the sequence is YGIDEKSIADRENPEKIKEKREETSEENKTDNSEKTK. The segment covering 329-363 has biased composition (basic and acidic residues); the sequence is IDEKSIADRENPEKIKEKREETSEENKTDNSEKTK.

This sequence belongs to the RecA family.

Its subcellular location is the cytoplasm. Can catalyze the hydrolysis of ATP in the presence of single-stranded DNA, the ATP-dependent uptake of single-stranded DNA by duplex DNA, and the ATP-dependent hybridization of homologous single-stranded DNAs. It interacts with LexA causing its activation and leading to its autocatalytic cleavage. This chain is Protein RecA, found in Lactobacillus acidophilus (strain ATCC 700396 / NCK56 / N2 / NCFM).